We begin with the raw amino-acid sequence, 486 residues long: UDP-GalNAc:beta-1,3-N-acetylgalactosaminyltransferase 2 (486 aa).

Residues 1 to 10 lie on the Cytoplasmic side of the membrane; that stretch reads MRHLLFLCPC. A helical; Signal-anchor for type II membrane protein transmembrane segment spans residues 11-31; the sequence is VIGVAFHLWLFNFSGLFSWFL. The Lumenal portion of the chain corresponds to 32 to 486; the sequence is VWSPHSYDIV…CGNPCACEDR (455 aa). N-linked (GlcNAc...) asparagine glycans are attached at residues Asn103 and Asn160.

This sequence belongs to the glycosyltransferase 31 family.

The protein localises to the golgi apparatus membrane. It localises to the endoplasmic reticulum. The catalysed reaction is 3-O-(N-acetyl-beta-D-glucosaminyl-(1-&gt;4)-alpha-D-mannosyl)-L-threonyl-[protein] + UDP-N-acetyl-alpha-D-galactosamine = 3-O-[beta-D-GalNAc-(1-&gt;3)-beta-D-GlcNAc-(1-&gt;4)-alpha-D-Man]-L-Thr-[protein] + UDP + H(+). It functions in the pathway protein modification; protein glycosylation. Functionally, beta-1,3-N-acetylgalactosaminyltransferase that synthesizes a unique carbohydrate structure, GalNAc-beta-1-3GlcNAc, on N- and O-glycans. Has no galactose nor galactosaminyl transferase activity toward any acceptor substrate. Involved in alpha-dystroglycan (dag1) glycosylation. The sequence is that of UDP-GalNAc:beta-1,3-N-acetylgalactosaminyltransferase 2 (b3galnt2) from Xenopus laevis (African clawed frog).